The primary structure comprises 713 residues: Denticleless protein homolog (713 aa).

3 WD repeats span residues 47 to 89, 96 to 135, and 138 to 178; these read GAAV…VQRL, AHTN…LIGE, and GHQC…KDGF. A DDB1-binding motif motif is present at residues 168-171; the sequence is WDTR. The Nuclear localization signal signature appears at 197–204; the sequence is PSKVKKRK. WD repeat units lie at residues 215–254, 270–309, 314–355, and 359–399; these read DSQQ…SAYR, TRKL…TEPV, GHQN…VPPV, and GHCQ…EDSA. A DDB1-binding motif motif is present at residues 244-247; the sequence is WDLR. Disordered stretches follow at residues 474-544, 604-623, and 635-700; these read TPQR…EKRA, GFDQ…NGTV, and SDLR…TPGS. Polar residues-rich tracts occupy residues 504–516 and 612–623; these read TPKS…TKTP and GPSTSFLINGTV. The segment covering 635 to 644 has biased composition (basic and acidic residues); the sequence is SDLRDKENSS. Polar residues predominate over residues 686 to 699; sequence NAPNSPVSVPTTPG.

Belongs to the WD repeat cdt2 family. In terms of assembly, component of the DCX(DTL) E3 ubiquitin ligase complex, at least composed of cul4 (cul4a or cul4b), ddb1, dtl/cdt2 and rbx1.

The protein localises to the nucleus. It localises to the cytoplasm. Its subcellular location is the cytoskeleton. It is found in the microtubule organizing center. The protein resides in the centrosome. The protein localises to the chromosome. The protein operates within protein modification; protein ubiquitination. Functionally, substrate-specific adapter of a DCX (DDB1-CUL4-X-box) E3 ubiquitin-protein ligase complex required for cell cycle control, DNA damage response and translesion DNA synthesis. The DCX(DTL) complex, also named CRL4(CDT2) complex, mediates the polyubiquitination and subsequent degradation of CDT1, CDKN1A/p21(CIP1), KMT5A and SDE2. CDT1 degradation in response to DNA damage is necessary to ensure proper cell cycle regulation of DNA replication. CDKN1A/p21(CIP1) degradation during S phase or following UV irradiation is essential to control replication licensing. KMT5A degradation is also important for a proper regulation of mechanisms such as TGF-beta signaling, cell cycle progression, DNA repair and cell migration. Most substrates require their interaction with PCNA for their polyubiquitination: substrates interact with PCNA via their PIP-box, and those containing the 'K+4' motif in the PIP box, recruit the DCX(DTL) complex, leading to their degradation. In undamaged proliferating cells, the DCX(DTL) complex also promotes the 'Lys-164' monoubiquitination of PCNA, thereby being involved in PCNA-dependent translesion DNA synthesis. May play a role in the regulation of the circadian clock. The sequence is that of Denticleless protein homolog (dtl) from Xenopus tropicalis (Western clawed frog).